The chain runs to 318 residues: NADH-ubiquinone oxidoreductase chain 1 (318 aa).

The next 8 helical transmembrane spans lie at 3–23 (LINL…LTLL), 69–89 (MLFI…WTPL), 102–122 (MLFI…SGWA), 144–164 (VTLA…TLLS), 171–191 (YIWL…STLA), 222–242 (LFFL…IILF), 253–273 (ELYT…FLWI), and 294–314 (LPLT…LAGI).

It belongs to the complex I subunit 1 family. Core subunit of respiratory chain NADH dehydrogenase (Complex I) which is composed of 45 different subunits.

Its subcellular location is the mitochondrion inner membrane. It carries out the reaction a ubiquinone + NADH + 5 H(+)(in) = a ubiquinol + NAD(+) + 4 H(+)(out). Functionally, core subunit of the mitochondrial membrane respiratory chain NADH dehydrogenase (Complex I) which catalyzes electron transfer from NADH through the respiratory chain, using ubiquinone as an electron acceptor. Essential for the catalytic activity and assembly of complex I. This chain is NADH-ubiquinone oxidoreductase chain 1 (MT-ND1), found in Murina suilla (Brown tube-nosed bat).